Here is a 274-residue protein sequence, read N- to C-terminus: Large ribosomal subunit protein uL2 (274 aa).

The segment at 223–274 (GIAMNPVDHPHGGGEGRSKGNHPVTPWGMPTKGYKTRKKKQSDKYIISRRKK) is disordered. The segment covering 230–240 (DHPHGGGEGRS) has biased composition (basic and acidic residues). Over residues 256 to 274 (YKTRKKKQSDKYIISRRKK) the composition is skewed to basic residues.

It belongs to the universal ribosomal protein uL2 family. In terms of assembly, part of the 50S ribosomal subunit. Forms a bridge to the 30S subunit in the 70S ribosome.

One of the primary rRNA binding proteins. Required for association of the 30S and 50S subunits to form the 70S ribosome, for tRNA binding and peptide bond formation. It has been suggested to have peptidyltransferase activity; this is somewhat controversial. Makes several contacts with the 16S rRNA in the 70S ribosome. The polypeptide is Large ribosomal subunit protein uL2 (Nautilia profundicola (strain ATCC BAA-1463 / DSM 18972 / AmH)).